The primary structure comprises 160 residues: Cytochrome b6-f complex subunit 4 (160 aa).

Helical transmembrane passes span 36-56 (LLYM…GLSV), 95-115 (LLGV…PFIE), and 131-151 (ILFL…TFPI).

Belongs to the cytochrome b family. PetD subfamily. As to quaternary structure, the 4 large subunits of the cytochrome b6-f complex are cytochrome b6, subunit IV (17 kDa polypeptide, petD), cytochrome f and the Rieske protein, while the 4 small subunits are petG, petL, petM and petN. The complex functions as a dimer. Post-translationally, the N-terminus is blocked.

The protein localises to the plastid. Its subcellular location is the chloroplast thylakoid membrane. Its function is as follows. Component of the cytochrome b6-f complex, which mediates electron transfer between photosystem II (PSII) and photosystem I (PSI), cyclic electron flow around PSI, and state transitions. This is Cytochrome b6-f complex subunit 4 from Chlamydomonas reinhardtii (Chlamydomonas smithii).